A 734-amino-acid chain; its full sequence is MAPSGTVADPPQCSTTDSFNSSDTAENDIRPFFVLHKASSGNHNGKLTGIVKSKRRIESPSPKIAKRSEVESVEEEDGQFFSTLRFKVFETVWSKIEKTIEDVLRNSNSKVFSGIHDWIRESFESIISSGALKLSEAVRSYPVLTQASSKQLLTAMVLTRNLEMVDDLLTFEELELHLKSQGCHVAKLSSMDFSAKSGVGGCLRGLLRQFVMPTVDVADVTILASWYRENKNHENPVVIIVDDTERCCGPVLSDLILILSEWAIKVPIFLIMGVSTAHDAPRKILSVNALQRLCATRFTLSSPAERMDAVLKAVFLKPCSGFTVSHKVALFMRSYFLCQDGTLTSFVRTLKIACLQHFSLEPLSIMLEHFCHDGVNQLSGEGTELLTEATMKHAFDLPSVTRNKITRSTFEMLPHFLLDLQRMPNPWSIVVLCLYEAGKFDKLRLLDIFCEILDPEARYLKYFSPSEIVNSQSHNSGRNNVIRRVLRKLRDLSPSQLSSMLKSWENLTAEFTEINDKVIELHPFMRAVEAAGQRQGLPNSPKKHASRSNSKLEKELKAMTDKVATVIEFMLREYMKPVESVPFHEILCFKNVDKLQSALLGDPRGRIQLDLLESHDILHCVCCSQRGTTLLPSMHDTSILYKLAQEHADVINLHDWYQSFKTILIPRSSKAKQKSKSSSKSKKRKEICEEPEAPAEALIQARFCRAVMELQITGLIRMPSKRRPDFVQRVAFGS.

2 disordered regions span residues 1 to 25 and 532 to 554; these read MAPSGTVADPPQCSTTDSFNSSDTA and GQRQGLPNSPKKHASRSNSKLEK. Positions 12–24 are enriched in polar residues; the sequence is QCSTTDSFNSSDT.

Belongs to the ORC3 family. Component of the origin recognition complex (ORC) composed of at least ORC1 (ORC1A or ORC1B), ORC2, ORC3, ORC4, ORC5 and ORC6. ORC is regulated in a cell-cycle and development dependent manner. It is sequentially assembled at the exit from anaphase of mitosis and disassembled as cells enter S phase. Interacts directly with ORC1A, ORC2, ORC4, ORC5 and ORC6. As to expression, follow a cell-cycle regulation with a peak at the G1/S-phase. Mostly expressed in siliques and flowers, and, to a lower exent, in flower buds, leaves, roots and stems.

The protein resides in the nucleus. Component of the origin recognition complex (ORC) that binds origins of replication. DNA-binding is ATP-dependent. The specific DNA sequences that define origins of replication have not been identified yet. In Arabidopsis thaliana (Mouse-ear cress), this protein is Origin of replication complex subunit 3.